The primary structure comprises 387 residues: Zinc finger transcription factor YY1 (387 aa).

C2H2-type zinc fingers lie at residues 79–103, 108–132, 138–162, 168–193, and 230–255; these read FLCSYDGCGKTFFDVSALRKHSHIH, YVCDQEGCGKKFLDSSKLKRHYLIH, YICTYEGCGKAFSLDFNLRSHMKTH, HICPYSGCVKRYAHEYKLKNHVAAYH, and YACPYEGCEKAYIHEYKLKLHLKREH. Residues 201 to 290 form an MED18-binding region; the sequence is TPKYTPPAEK…DDGSDQDVYR (90 aa). The disordered stretch occupies residues 258–387; the sequence is HLQEENADTP…DDDEETEYED (130 aa). Ser-284 carries the phosphoserine modification. Residues 291 to 305 are compositionally biased toward basic residues; sequence KHASNGKGQTHKQQS. The Nuclear localization signal motif lies at 319–326; sequence GKKGSTSS. The stretch at 339–367 forms a coiled coil; that stretch reads AKETFEEVEREEEEDSEETEEDRDNVEDG. 2 stretches are compositionally biased toward acidic residues: residues 344–363 and 373–387; these read EEVEREEEEDSEETEEDRDN and NNEDDDDDEETEYED.

Interacts with MED18 to suppress disease susceptibility via the repression of genes glutaredoxins GRX480, GRXS13 and thioredoxin TRX-h5. In terms of tissue distribution, mostly expressed in flowers, to a lower extent in seedlings, stems and leaves, and, at low levels, in roots and senescent leaves.

It localises to the nucleus. Its function is as follows. Dual-function transcription factor with both repression and activation activities. Binds to 5'-CCATATT-3' motif in target gene promoters (e.g. ABR1). Also binds to G-rich DNA motif 5'-GGGGGCAGTGG-3'. Regulates the expression of genes involved in diverse cellular pathways, including glucose metabolism, photosynthesis, phototropism and stress response (e.g. salt, drought and osmotic stress). Regulates plant immunity, especially during necrotrophic fungal infection (e.g. B.cinerea). Binds to ABR1 promoter and promotes its expression, thus negatively regulating the abscisic acid (ABA) signaling pathway. Represses ABA- and salt-responsive genes expression. In Arabidopsis thaliana (Mouse-ear cress), this protein is Zinc finger transcription factor YY1.